The chain runs to 118 residues: Large ribosomal subunit protein uL18 (118 aa).

The protein belongs to the universal ribosomal protein uL18 family. Part of the 50S ribosomal subunit; part of the 5S rRNA/L5/L18/L25 subcomplex. Contacts the 5S and 23S rRNAs.

Its function is as follows. This is one of the proteins that bind and probably mediate the attachment of the 5S RNA into the large ribosomal subunit, where it forms part of the central protuberance. The polypeptide is Large ribosomal subunit protein uL18 (Wolinella succinogenes (strain ATCC 29543 / DSM 1740 / CCUG 13145 / JCM 31913 / LMG 7466 / NCTC 11488 / FDC 602W) (Vibrio succinogenes)).